The following is a 306-amino-acid chain: 4-hydroxy-3-methylbut-2-enyl diphosphate reductase 1 (306 aa).

[4Fe-4S] cluster is bound at residue cysteine 10. Residues histidine 39 and histidine 72 each coordinate (2E)-4-hydroxy-3-methylbut-2-enyl diphosphate. Dimethylallyl diphosphate contacts are provided by histidine 39 and histidine 72. Isopentenyl diphosphate-binding residues include histidine 39 and histidine 72. Cysteine 94 provides a ligand contact to [4Fe-4S] cluster. (2E)-4-hydroxy-3-methylbut-2-enyl diphosphate is bound at residue histidine 122. Position 122 (histidine 122) interacts with dimethylallyl diphosphate. Histidine 122 serves as a coordination point for isopentenyl diphosphate. Glutamate 124 functions as the Proton donor in the catalytic mechanism. Threonine 162 provides a ligand contact to (2E)-4-hydroxy-3-methylbut-2-enyl diphosphate. Position 192 (cysteine 192) interacts with [4Fe-4S] cluster. 4 residues coordinate (2E)-4-hydroxy-3-methylbut-2-enyl diphosphate: serine 220, serine 221, asparagine 222, and serine 264. Residues serine 220, serine 221, asparagine 222, and serine 264 each contribute to the dimethylallyl diphosphate site. Residues serine 220, serine 221, asparagine 222, and serine 264 each coordinate isopentenyl diphosphate.

The protein belongs to the IspH family. [4Fe-4S] cluster is required as a cofactor.

The enzyme catalyses isopentenyl diphosphate + 2 oxidized [2Fe-2S]-[ferredoxin] + H2O = (2E)-4-hydroxy-3-methylbut-2-enyl diphosphate + 2 reduced [2Fe-2S]-[ferredoxin] + 2 H(+). It catalyses the reaction dimethylallyl diphosphate + 2 oxidized [2Fe-2S]-[ferredoxin] + H2O = (2E)-4-hydroxy-3-methylbut-2-enyl diphosphate + 2 reduced [2Fe-2S]-[ferredoxin] + 2 H(+). It functions in the pathway isoprenoid biosynthesis; dimethylallyl diphosphate biosynthesis; dimethylallyl diphosphate from (2E)-4-hydroxy-3-methylbutenyl diphosphate: step 1/1. Its pathway is isoprenoid biosynthesis; isopentenyl diphosphate biosynthesis via DXP pathway; isopentenyl diphosphate from 1-deoxy-D-xylulose 5-phosphate: step 6/6. Catalyzes the conversion of 1-hydroxy-2-methyl-2-(E)-butenyl 4-diphosphate (HMBPP) into a mixture of isopentenyl diphosphate (IPP) and dimethylallyl diphosphate (DMAPP). Acts in the terminal step of the DOXP/MEP pathway for isoprenoid precursor biosynthesis. The sequence is that of 4-hydroxy-3-methylbut-2-enyl diphosphate reductase 1 from Rhodopseudomonas palustris (strain ATCC BAA-98 / CGA009).